A 377-amino-acid polypeptide reads, in one-letter code: L-arabinitol 4-dehydrogenase (377 aa).

Zn(2+) contacts are provided by Cys66, His91, Glu92, Cys121, Cys124, Cys127, Cys135, and Glu176. NAD(+) is bound by residues 203 to 204 (PI), Asp224, Arg229, Ile296, and 320 to 322 (QYR).

The protein belongs to the zinc-containing alcohol dehydrogenase family. In terms of assembly, homotetramer. Requires Zn(2+) as cofactor. The N-terminus is blocked.

The enzyme catalyses L-arabinitol + NAD(+) = L-xylulose + NADH + H(+). The protein operates within carbohydrate degradation; L-arabinose degradation via L-arabinitol; D-xylulose 5-phosphate from L-arabinose (fungal route): step 2/5. In terms of biological role, catalyzes the NAD-dependent oxidation of L-arabinitol to L-xylulose in the fungal L-arabinose catabolic pathway. L-arabinose catabolism is important for using plant material as a carbon source. Can partially compensate for xylitol dehydrogenase in xdh1 mutants. Also oxidizes galactitol to L-xylo-3-hexulose as an alternative to the standard Leloir pathway for D-galactose metabolism. NADP cannot act as a cosubstrate. In Hypocrea jecorina (Trichoderma reesei), this protein is L-arabinitol 4-dehydrogenase (lad1).